We begin with the raw amino-acid sequence, 393 residues long: tRNA(Met) cytidine acetate ligase (393 aa).

3 residues coordinate ATP: glycine 81, asparagine 142, and arginine 167.

This sequence belongs to the TmcAL family.

The protein localises to the cytoplasm. The enzyme catalyses cytidine(34) in elongator tRNA(Met) + acetate + ATP = N(4)-acetylcytidine(34) in elongator tRNA(Met) + AMP + diphosphate. Functionally, catalyzes the formation of N(4)-acetylcytidine (ac(4)C) at the wobble position of elongator tRNA(Met), using acetate and ATP as substrates. First activates an acetate ion to form acetyladenylate (Ac-AMP) and then transfers the acetyl group to tRNA to form ac(4)C34. This Bacillus cereus (strain ATCC 10987 / NRS 248) protein is tRNA(Met) cytidine acetate ligase.